The primary structure comprises 615 residues: Vitamin B12 transporter BtuB (615 aa).

A signal peptide spans 1–20 (MIKKISLLTALSVTAFSGWA). The short motif at 26–33 (NAMVVTAN) is the TonB box element. Residues 38–152 (PVNSVLAPTT…IGGVVNIITT (115 aa)) form the TBDR plug domain. Cyanocob(III)alamin is bound by residues Ser85, Asn92, and 110–111 (IS). In terms of domain architecture, TBDR beta-barrel spans 155-615 (KNGTTLNAGV…EYYLTGSYTF (461 aa)). Transmembrane regions (beta stranded) follow at residues 158 to 165 (TTLNAGVG), 169 to 178 (YQSYDAATQQ), and 184 to 195 (TTATLAGNYVYT). Residues Asp199, Gln210, Asp212, and Asp214 each coordinate Ca(2+). 2 beta stranded membrane passes run 216–226 (FMSKSLYGTVE) and 231–247 (DQFSGFLRGYGYDNRTD). Tyr248, Asp249, and Asp255 together coordinate Ca(2+). The next 14 beta stranded transmembrane spans lie at 257-271 (RQLYSQTWDTGLRYQ), 273-290 (GIYSTQLIGSYSHSKDYD), 303-319 (TLVDSQQYNAQWGNVLQ), 322-331 (AGTVSAGVDW), 347-363 (ESQNNTGIYLTGQQRFA), 365-375 (IVLEGSVRGDD), 379-394 (FGWHNTWRTGASWEFI), 397-411 (YSLIASYGTAFKAPN), 429-438 (ESKQWESGVE), 444-453 (VIWRVSGYRN), 468-486 (VYENVGKAKIKGIEATASF), 490-505 (PVGHRISYDYVDSRNA), 513-525 (RRAKQQVKYQLDW), and 531-546 (DWSVTYQYLGSRYDKD). Thr303 provides a ligand contact to cyanocob(III)alamin. Residue Arg513 participates in cyanocob(III)alamin binding. Tyr547 serves as a coordination point for cyanocob(III)alamin. 3 beta stranded membrane-spanning segments follow: residues 559-573 (TVKLGGVSLWDLAAS), 586-597 (IANLFDKDYETA), and 603-615 (AGREYYLTGSYTF). A TonB C-terminal box motif is present at residues 598–615 (YGYRTAGREYYLTGSYTF).

The protein belongs to the TonB-dependent receptor family. BtuB (TC 1.B.14.3.1) subfamily.

It localises to the cell outer membrane. Its function is as follows. Involved in the active translocation of vitamin B12 (cyanocobalamin) across the outer membrane to the periplasmic space. It derives its energy for transport by interacting with the trans-periplasmic membrane protein TonB. This Pectobacterium atrosepticum (strain SCRI 1043 / ATCC BAA-672) (Erwinia carotovora subsp. atroseptica) protein is Vitamin B12 transporter BtuB.